A 439-amino-acid chain; its full sequence is MKRVADVLIVGSGVAGLYASLNLREDLEIIMVSKKSVNLCNSSLAQGGIAVARGKEDFQSFIEDTLKAGKYENNIDSVRVLVEESMDNINKLIDLGANFEKDENGVLFTKEGAHEINRIVYHKDITGKHVEDILLENVKRRKNIKIIEDCEMVDIYHRGNRCIGALFNKDGQDLSIYAKVVILATGGIGGLFKKSTNERIITGDSIGVAIRNNIEIKDLSYIQIHPTAFFSKKSEEKRFLISESVRGEGGKLLNCNGERFVDELLPRDIVSKKIYEEMKKTNSNNVFLDVSFMEKSFLQNRFPNIYNKCLEEGIDISKEPIPVAPAQHYFMGGIKVDLNGKTSMENLYAFGETSCTGVHGANRLASNSLLEALVFSRRGALEINSYIDNLELIIEERECEDLDKYRLLNRKILIDEICRLRGDIKDELVTCGGECKKSS.

FAD contacts are provided by residues 12–15, K34, 41–48, and D204; these read SGVA and NSSLAQGG. Catalysis depends on R267, which acts as the Proton donor/acceptor. Residues E352 and 368 to 369 each bind FAD; that span reads SL.

The protein belongs to the FAD-dependent oxidoreductase 2 family. NadB subfamily. FAD serves as cofactor.

Its subcellular location is the cytoplasm. It carries out the reaction L-aspartate + O2 = iminosuccinate + H2O2. The protein operates within cofactor biosynthesis; NAD(+) biosynthesis; iminoaspartate from L-aspartate (oxidase route): step 1/1. Catalyzes the oxidation of L-aspartate to iminoaspartate, the first step in the de novo biosynthesis of NAD(+). This chain is L-aspartate oxidase (nadB), found in Clostridium perfringens (strain 13 / Type A).